A 393-amino-acid polypeptide reads, in one-letter code: Enoyl-[acyl-carrier-protein] reductase [NADH] (393 aa).

Residues 48–53 (GSSTGY), 74–75 (FE), 111–112 (DA), and 139–140 (LA) contribute to the NAD(+) site. Tyr-225 provides a ligand contact to substrate. Tyr-235 acts as the Proton donor in catalysis. NAD(+)-binding positions include Lys-244 and 273–275 (LVT).

It belongs to the TER reductase family. Monomer.

It carries out the reaction a 2,3-saturated acyl-[ACP] + NAD(+) = a (2E)-enoyl-[ACP] + NADH + H(+). The protein operates within lipid metabolism; fatty acid biosynthesis. Its function is as follows. Involved in the final reduction of the elongation cycle of fatty acid synthesis (FAS II). Catalyzes the reduction of a carbon-carbon double bond in an enoyl moiety that is covalently linked to an acyl carrier protein (ACP). The polypeptide is Enoyl-[acyl-carrier-protein] reductase [NADH] (Pseudoalteromonas atlantica (strain T6c / ATCC BAA-1087)).